The sequence spans 439 residues: tRNA-2-methylthio-N(6)-dimethylallyladenosine synthase (439 aa).

The MTTase N-terminal domain occupies 2 to 115; sequence KGLYIKTYGC…LPELIVKASR (114 aa). [4Fe-4S] cluster contacts are provided by Cys-11, Cys-47, Cys-78, Cys-155, Cys-159, and Cys-162. Residues 141–372 enclose the Radical SAM core domain; the sequence is NSQGSSAFLA…QKLISKQQLE (232 aa). The 65-residue stretch at 375–439 folds into the TRAM domain; that stretch reads QSMVGKTIPV…QSSLLGCAFH (65 aa).

Belongs to the methylthiotransferase family. MiaB subfamily. In terms of assembly, monomer. [4Fe-4S] cluster is required as a cofactor.

The protein localises to the cytoplasm. The enzyme catalyses N(6)-dimethylallyladenosine(37) in tRNA + (sulfur carrier)-SH + AH2 + 2 S-adenosyl-L-methionine = 2-methylsulfanyl-N(6)-dimethylallyladenosine(37) in tRNA + (sulfur carrier)-H + 5'-deoxyadenosine + L-methionine + A + S-adenosyl-L-homocysteine + 2 H(+). Functionally, catalyzes the methylthiolation of N6-(dimethylallyl)adenosine (i(6)A), leading to the formation of 2-methylthio-N6-(dimethylallyl)adenosine (ms(2)i(6)A) at position 37 in tRNAs that read codons beginning with uridine. The chain is tRNA-2-methylthio-N(6)-dimethylallyladenosine synthase from Wolbachia pipientis wMel.